A 287-amino-acid chain; its full sequence is MNGILLVDKPVGLTSHDVVEYVRKLFKTKVGHCGTLDPFASGLLVLLIGEATKLSSFFTQTKKTYIATMQFGIKTDTLDITGKVQLRNNIFIEQNEIEDCLKDLKGEVELSVPIYSAKKVKGRKLYEYAREGIDIEIPKIKSIIYSIEMINYCYPYMTFKVECSHGTYIRSLAEEIAKKLSTVATLVQLRRAKNGVFDIKAAFSLDFISEDSIIPLENLILNEIIVNESVYKKLINGNPLTRKDIKEIRLNDSLFEDFYKISMKDAFFVYKREGDKFKYLLKVENYR.

The active-site Nucleophile is the Asp37.

This sequence belongs to the pseudouridine synthase TruB family. Type 1 subfamily.

The enzyme catalyses uridine(55) in tRNA = pseudouridine(55) in tRNA. Its function is as follows. Responsible for synthesis of pseudouridine from uracil-55 in the psi GC loop of transfer RNAs. This Caldicellulosiruptor saccharolyticus (strain ATCC 43494 / DSM 8903 / Tp8T 6331) protein is tRNA pseudouridine synthase B.